A 498-amino-acid chain; its full sequence is Angiopoietin-4 (498 aa).

An N-terminal signal peptide occupies residues 1-22 (MPSPPAMLLGGLLLIVASTTVA). A disordered region spans residues 51 to 80 (EPEPCPPEPEAFGGSNSLQRDSPAATLNLG). The stretch at 85–109 (QRMRQLEKMLENNTQWLQKLERYIQ) forms a coiled coil. 8 N-linked (GlcNAc...) asparagine glycosylation sites follow: asparagine 96, asparagine 126, asparagine 158, asparagine 247, asparagine 295, asparagine 306, asparagine 332, and asparagine 424. A coiled-coil region spans residues 186 to 254 (HELHRLQGHN…SSNSSLLQRQ (69 aa)). Residues 277 to 497 (RAADQLFQDC…TTRMMVRPSG (221 aa)) form the Fibrinogen C-terminal domain. Residues cysteine 286 and cysteine 315 are joined by a disulfide bond. A disulfide bridge links cysteine 439 with cysteine 452.

In terms of assembly, homodimer; disulfide-linked. Interacts with TEK/TIE2.

Its subcellular location is the secreted. Its function is as follows. Binds to TEK/TIE2, modulating ANGPT1 signaling. Can induce tyrosine phosphorylation of TEK/TIE2. Promotes endothelial cell survival, migration and angiogenesis. The sequence is that of Angiopoietin-4 (ANGPT4) from Bos taurus (Bovine).